A 438-amino-acid chain; its full sequence is Enolase 1 (438 aa).

His-160 and Glu-169 together coordinate substrate. Glu-212 serves as the catalytic Proton donor. Mg(2+) contacts are provided by Asp-247, Glu-296, and Asp-321. Residues Glu-296 and Asp-321 each coordinate substrate. The active-site Proton acceptor is Lys-346. Residues 373 to 376 (SHRS) and Lys-397 each bind substrate.

The protein belongs to the enolase family. As to quaternary structure, homodimer. The cofactor is Mg(2+).

It is found in the cytoplasm. It catalyses the reaction (2R)-2-phosphoglycerate = phosphoenolpyruvate + H2O. It participates in carbohydrate degradation; glycolysis; pyruvate from D-glyceraldehyde 3-phosphate: step 4/5. The chain is Enolase 1 (ENO1) from Candida glabrata (strain ATCC 2001 / BCRC 20586 / JCM 3761 / NBRC 0622 / NRRL Y-65 / CBS 138) (Yeast).